A 236-amino-acid chain; its full sequence is MLALMDADGNIAWSGEYDEWGNQLNEENPHHLHQPYRLPGQQYDKESGLYYNRNRYYDPLQGRYITQDPIGLEGGWSLYAYPLNPVNGIDPLGLSPADVALIRRKDQLNHQRAWDILSDTYEDMKRLNLGGTDQFFHCMAFCRVSKLNDAGVSRSAKGLGYEKEIRDYGLNLFGMYGRKVKLSHSEMIEDNKKDLAVNDHGLTCPSTTDCSDRCSDYINPEHKKTIKALQDAGYLK.

Belongs to the RHS family.

This is an uncharacterized protein from Escherichia coli (strain K12).